Here is a 521-residue protein sequence, read N- to C-terminus: Matrix metalloproteinase-A (521 aa).

A signal peptide spans 1–21 (MFTGLHDILIILFLLVTLKIA). A propeptide spans 22 to 95 (QNVDHTKFLQ…EDHQKSRGKR (74 aa)) (activation peptide). The Cysteine switch motif lies at 78 to 85 (PRCGHPDV). Cys80 contacts Zn(2+). Over 96–500 (YAPPQFKWKE…FCPRNEKLVL (405 aa)) the chain is Extracellular. N-linked (GlcNAc...) asparagine glycosylation is present at Asn199. His215 is a Zn(2+) binding site. The active site involves Glu216. The Zn(2+) site is built by His219 and His225. Positions 259–298 (KASKKENEEEERKTENEDKRRKTEKDRGRTREHESDDIRP) are disordered. Over residues 261-298 (SKKENEEEERKTENEDKRRKTEKDRGRTREHESDDIRP) the composition is skewed to basic and acidic residues. Hemopexin repeat units lie at residues 300–347 (ECRV…FPGL), 391–443 (EKYV…WARV), and 444–492 (PKGV…FGFC). The N-linked (GlcNAc...) asparagine glycan is linked to Asn469. The chain crosses the membrane as a helical span at residues 501–521 (NSSSSHFSLIYATITILILIF).

Belongs to the peptidase M10A family. Zn(2+) is required as a cofactor. In terms of tissue distribution, expressed in the anchor cell. Expressed in the anchor cell throughout the L3 and the early L4 stage, but not in vulva precursor cells P6.p, P6.px, or P6.pxx. Expression in P6.pxxx cells begins in late-L4 stage. During L4 lethargus, expressed in all four vulE cells, but not in vulF cells. The expression in vulE cells persists in adulthood. In males, expressed in the linker cell (LC) from the early L4 stage until LC death during the L4-to-adult molt.

Its subcellular location is the cell membrane. It is found in the basolateral cell membrane. Metalloprotease which, together with cadherin cdh-3 and hemicentin him-4, plays a role in anchor cell (AC) invasion during postembryonic vulval development probably by promoting the degradation of the basement membrane separating the gonad from the vulva epithelium. The chain is Matrix metalloproteinase-A from Caenorhabditis elegans.